Consider the following 987-residue polypeptide: Kinesin-like protein KIN-14G (987 aa).

In terms of domain architecture, Calponin-homology (CH) spans 44–163 (SLRRYEAAGW…CILALKSYSE (120 aa)). A disordered region spans residues 201 to 221 (ISRTQSTDMLSTDQPLSSDGD). Residues 394–721 (NIRVYCRVRP…LKFAERVGSV (328 aa)) form the Kinesin motor domain. Residue 478 to 485 (GQTGSGKT) coordinates ATP. Residues 725–754 (AARVNKDNSEVKELKEQIANLKMALVRKGN) are a coiled coil. Disordered regions lie at residues 759 to 849 (QPTA…ESKS) and 927 to 987 (NIQN…SLGT). Residues 788–797 (MGNTSNNSRP) are compositionally biased toward polar residues. Basic and acidic residues predominate over residues 840-849 (GKDEDRESKS). Over residues 964–974 (PPNTVNSQPQR) the composition is skewed to polar residues.

It belongs to the TRAFAC class myosin-kinesin ATPase superfamily. Kinesin family. KIN-14 subfamily. In terms of assembly, monomer. In terms of tissue distribution, flower specific.

The protein localises to the cytoplasm. It localises to the cytoskeleton. Microtubule-binding motor protein. This chain is Kinesin-like protein KIN-14G, found in Arabidopsis thaliana (Mouse-ear cress).